The following is a 123-amino-acid chain: Large ribosomal subunit protein bL12 (123 aa).

Belongs to the bacterial ribosomal protein bL12 family. Homodimer. Part of the ribosomal stalk of the 50S ribosomal subunit. Forms a multimeric L10(L12)X complex, where L10 forms an elongated spine to which 2 to 4 L12 dimers bind in a sequential fashion. Binds GTP-bound translation factors.

In terms of biological role, forms part of the ribosomal stalk which helps the ribosome interact with GTP-bound translation factors. Is thus essential for accurate translation. This Bartonella henselae (strain ATCC 49882 / DSM 28221 / CCUG 30454 / Houston 1) (Rochalimaea henselae) protein is Large ribosomal subunit protein bL12.